The chain runs to 380 residues: Queuine tRNA-ribosyltransferase (380 aa).

D96 functions as the Proton acceptor in the catalytic mechanism. Substrate is bound by residues 96 to 100 (DSGGF), D150, Q193, and G220. Positions 251-257 (GVGAPDS) are RNA binding. D270 (nucleophile) is an active-site residue. The RNA binding; important for wobble base 34 recognition stretch occupies residues 275 to 279 (TRIAR). Zn(2+)-binding residues include C308, C310, C313, and H339.

This sequence belongs to the queuine tRNA-ribosyltransferase family. Homodimer. Within each dimer, one monomer is responsible for RNA recognition and catalysis, while the other monomer binds to the replacement base PreQ1. It depends on Zn(2+) as a cofactor.

The catalysed reaction is 7-aminomethyl-7-carbaguanine + guanosine(34) in tRNA = 7-aminomethyl-7-carbaguanosine(34) in tRNA + guanine. It functions in the pathway tRNA modification; tRNA-queuosine biosynthesis. In terms of biological role, catalyzes the base-exchange of a guanine (G) residue with the queuine precursor 7-aminomethyl-7-deazaguanine (PreQ1) at position 34 (anticodon wobble position) in tRNAs with GU(N) anticodons (tRNA-Asp, -Asn, -His and -Tyr). Catalysis occurs through a double-displacement mechanism. The nucleophile active site attacks the C1' of nucleotide 34 to detach the guanine base from the RNA, forming a covalent enzyme-RNA intermediate. The proton acceptor active site deprotonates the incoming PreQ1, allowing a nucleophilic attack on the C1' of the ribose to form the product. After dissociation, two additional enzymatic reactions on the tRNA convert PreQ1 to queuine (Q), resulting in the hypermodified nucleoside queuosine (7-(((4,5-cis-dihydroxy-2-cyclopenten-1-yl)amino)methyl)-7-deazaguanosine). The sequence is that of Queuine tRNA-ribosyltransferase from Streptococcus thermophilus (strain CNRZ 1066).